The sequence spans 426 residues: Glutamate-1-semialdehyde 2,1-aminomutase (426 aa).

K265 is modified (N6-(pyridoxal phosphate)lysine).

The protein belongs to the class-III pyridoxal-phosphate-dependent aminotransferase family. HemL subfamily. In terms of assembly, homodimer. Pyridoxal 5'-phosphate serves as cofactor.

It localises to the cytoplasm. It catalyses the reaction (S)-4-amino-5-oxopentanoate = 5-aminolevulinate. It functions in the pathway porphyrin-containing compound metabolism; protoporphyrin-IX biosynthesis; 5-aminolevulinate from L-glutamyl-tRNA(Glu): step 2/2. This is Glutamate-1-semialdehyde 2,1-aminomutase from Cellvibrio japonicus (strain Ueda107) (Pseudomonas fluorescens subsp. cellulosa).